The primary structure comprises 127 residues: MQRTLLKSKLHRVHVTQCELHYIGSCAIDEDLLEAADICEYEEIQIWNVNNGERFATYAIRGERGSGMISVNGSAARRAAVGDILIIATFARFDEQERLEHRPRLVHVDEQNRIIELPAGIPVQAAP.

Catalysis depends on Ser-25, which acts as the Schiff-base intermediate with substrate; via pyruvic acid. At Ser-25 the chain carries Pyruvic acid (Ser). A substrate-binding site is contributed by Thr-57. The Proton donor role is filled by Tyr-58. 73–75 (GSA) is a substrate binding site.

This sequence belongs to the PanD family. Heterooctamer of four alpha and four beta subunits. The cofactor is pyruvate. In terms of processing, is synthesized initially as an inactive proenzyme, which is activated by self-cleavage at a specific serine bond to produce a beta-subunit with a hydroxyl group at its C-terminus and an alpha-subunit with a pyruvoyl group at its N-terminus.

The protein localises to the cytoplasm. The enzyme catalyses L-aspartate + H(+) = beta-alanine + CO2. It participates in cofactor biosynthesis; (R)-pantothenate biosynthesis; beta-alanine from L-aspartate: step 1/1. Its function is as follows. Catalyzes the pyruvoyl-dependent decarboxylation of aspartate to produce beta-alanine. In Laribacter hongkongensis (strain HLHK9), this protein is Aspartate 1-decarboxylase.